Reading from the N-terminus, the 207-residue chain is Peptidyl-tRNA hydrolase (207 aa).

Tyrosine 30 contacts tRNA. The active-site Proton acceptor is histidine 35. TRNA contacts are provided by tyrosine 81, asparagine 83, and asparagine 129.

Belongs to the PTH family. As to quaternary structure, monomer.

It localises to the cytoplasm. The enzyme catalyses an N-acyl-L-alpha-aminoacyl-tRNA + H2O = an N-acyl-L-amino acid + a tRNA + H(+). Functionally, hydrolyzes ribosome-free peptidyl-tRNAs (with 1 or more amino acids incorporated), which drop off the ribosome during protein synthesis, or as a result of ribosome stalling. In terms of biological role, catalyzes the release of premature peptidyl moieties from peptidyl-tRNA molecules trapped in stalled 50S ribosomal subunits, and thus maintains levels of free tRNAs and 50S ribosomes. The chain is Peptidyl-tRNA hydrolase from Bordetella avium (strain 197N).